Here is a 276-residue protein sequence, read N- to C-terminus: NH(3)-dependent NAD(+) synthetase (276 aa).

43–50 lines the ATP pocket; it reads GISGGVDS. Asp-49 provides a ligand contact to Mg(2+). Residue Arg-146 participates in deamido-NAD(+) binding. An ATP-binding site is contributed by Thr-166. Glu-171 is a binding site for Mg(2+). Positions 179 and 186 each coordinate deamido-NAD(+). Lys-195 and Thr-217 together coordinate ATP. 266–267 is a binding site for deamido-NAD(+); sequence HK.

This sequence belongs to the NAD synthetase family. As to quaternary structure, homodimer.

It catalyses the reaction deamido-NAD(+) + NH4(+) + ATP = AMP + diphosphate + NAD(+) + H(+). The protein operates within cofactor biosynthesis; NAD(+) biosynthesis; NAD(+) from deamido-NAD(+) (ammonia route): step 1/1. In terms of biological role, catalyzes the ATP-dependent amidation of deamido-NAD to form NAD. Uses ammonia as a nitrogen source. The protein is NH(3)-dependent NAD(+) synthetase of Vibrio parahaemolyticus serotype O3:K6 (strain RIMD 2210633).